The sequence spans 403 residues: MLSPTNSTSKTAPVPPRDSSKPVLISEEPRNQLLQKVARTALAVLLVVVTLGLILLFYSFSDLQSFPWCCQTHPSTKEQPTISIPVPLPSPPLAVPRPSTPPAPTPAISRPSTPSAPKPSTPPPLLPKAPKPVKTQENLFPLVPEQVFVEMYEDMARRRIIEALVPAWDSDIIFKCLCYFHTLYPGLIPLETFPPATIFNFKQKIISILEDKKAVLRGEPIKGSLPICCSKENYRRHLQGTTLLPMFMWYHPTPKTLADTMQTMKQLAIKGSVGASHWLLVIVDIQARRLVYFDSLYNYVMPPEDMKKDLQSLAQQLDQVYPARNGQKFSVKIAAKEVIQKDSGFSCGAWCCQFLYWYLRDPFTDALNDLPVDSVERHENLASFVQACEAAVQDLPELSWPEA.

A compositionally biased stretch (polar residues) spans Met-1–Thr-11. Residues Met-1–Leu-24 form a disordered region. Residues Thr-40–Phe-60 traverse the membrane as a helical segment. Positions Lys-77–Pro-132 are disordered. 2 stretches are compositionally biased toward pro residues: residues Val-86 to Thr-105 and Pro-114 to Pro-130. Active-site residues include His-277, Asp-294, and Cys-347.

This sequence belongs to the peptidase C48 family.

The protein localises to the secreted. It is found in the host cell. Its subcellular location is the membrane. Effector proteins function to alter host cell physiology and promote bacterial survival in host tissues. This protease possesses deubiquitinating and deneddylating activities. The chain is Deubiquitinase and deneddylase Dub1 (cdu1) from Chlamydia trachomatis serovar L2b (strain UCH-1/proctitis).